A 186-amino-acid polypeptide reads, in one-letter code: uncharacterized protein (186 aa).

Transmembrane regions (helical) follow at residues 5-25 (LIAC…FEDI), 39-59 (IITI…KLFA), 62-82 (NLLF…ILLF), and 122-142 (GFFE…IALM).

Its subcellular location is the cell membrane. This is an uncharacterized protein from Borreliella burgdorferi (strain ATCC 35210 / DSM 4680 / CIP 102532 / B31) (Borrelia burgdorferi).